A 485-amino-acid chain; its full sequence is UDP-N-acetylmuramate--L-alanine ligase (485 aa).

120-126 (GSHGKTT) contacts ATP.

The protein belongs to the MurCDEF family.

The protein resides in the cytoplasm. The catalysed reaction is UDP-N-acetyl-alpha-D-muramate + L-alanine + ATP = UDP-N-acetyl-alpha-D-muramoyl-L-alanine + ADP + phosphate + H(+). It participates in cell wall biogenesis; peptidoglycan biosynthesis. Its function is as follows. Cell wall formation. This chain is UDP-N-acetylmuramate--L-alanine ligase, found in Rickettsia rickettsii (strain Iowa).